A 161-amino-acid chain; its full sequence is uncharacterized protein (161 aa).

This is an uncharacterized protein from Homo sapiens (Human).